The following is a 194-amino-acid chain: Phosphoheptose isomerase (194 aa).

The SIS domain maps to 37-194; it reads ISDSFKQGGK…LIEFEMAKDV (158 aa). Position 52–54 (52–54) interacts with substrate; that stretch reads NGG. Residues histidine 61 and glutamate 65 each coordinate Zn(2+). Residues glutamate 65, 93 to 94, 119 to 121, serine 124, and glutamine 172 each bind substrate; these read ND and STS. Residues glutamine 172 and histidine 180 each coordinate Zn(2+).

This sequence belongs to the SIS family. GmhA subfamily. As to quaternary structure, homotetramer. It depends on Zn(2+) as a cofactor.

The protein resides in the cytoplasm. The catalysed reaction is 2 D-sedoheptulose 7-phosphate = D-glycero-alpha-D-manno-heptose 7-phosphate + D-glycero-beta-D-manno-heptose 7-phosphate. It participates in carbohydrate biosynthesis; D-glycero-D-manno-heptose 7-phosphate biosynthesis; D-glycero-alpha-D-manno-heptose 7-phosphate and D-glycero-beta-D-manno-heptose 7-phosphate from sedoheptulose 7-phosphate: step 1/1. Its function is as follows. Catalyzes the isomerization of sedoheptulose 7-phosphate in D-glycero-D-manno-heptose 7-phosphate. This Actinobacillus succinogenes (strain ATCC 55618 / DSM 22257 / CCUG 43843 / 130Z) protein is Phosphoheptose isomerase.